We begin with the raw amino-acid sequence, 868 residues long: Leucine--tRNA ligase (868 aa).

A 'HIGH' region motif is present at residues 42 to 52 (PYPSGKLHMGH). Residues 627–631 (KMSKS) carry the 'KMSKS' region motif. Lys-630 contributes to the ATP binding site.

Belongs to the class-I aminoacyl-tRNA synthetase family.

It localises to the cytoplasm. It catalyses the reaction tRNA(Leu) + L-leucine + ATP = L-leucyl-tRNA(Leu) + AMP + diphosphate. This chain is Leucine--tRNA ligase, found in Pseudomonas putida (strain GB-1).